Consider the following 397-residue polypeptide: Phosphoglycerate kinase (397 aa).

Residues 25–27, Arg41, 64–67, Arg118, and Arg151 contribute to the substrate site; these read DLN and HLGR. Residues Lys202, Glu324, and 350 to 353 contribute to the ATP site; that span reads GGDT.

It belongs to the phosphoglycerate kinase family. As to quaternary structure, monomer.

It localises to the cytoplasm. It carries out the reaction (2R)-3-phosphoglycerate + ATP = (2R)-3-phospho-glyceroyl phosphate + ADP. Its pathway is carbohydrate degradation; glycolysis; pyruvate from D-glyceraldehyde 3-phosphate: step 2/5. The sequence is that of Phosphoglycerate kinase from Paracidovorax citrulli (strain AAC00-1) (Acidovorax citrulli).